We begin with the raw amino-acid sequence, 296 residues long: tRNA dimethylallyltransferase (296 aa).

2–9 (GPTASGKT) lines the ATP pocket. 4–9 (TASGKT) contributes to the substrate binding site. Interaction with substrate tRNA regions lie at residues 27 to 30 (DSAL), 151 to 155 (QRLSR), and 232 to 237 (RCVGYR).

This sequence belongs to the IPP transferase family. Monomer. Mg(2+) is required as a cofactor.

It catalyses the reaction adenosine(37) in tRNA + dimethylallyl diphosphate = N(6)-dimethylallyladenosine(37) in tRNA + diphosphate. Its function is as follows. Catalyzes the transfer of a dimethylallyl group onto the adenine at position 37 in tRNAs that read codons beginning with uridine, leading to the formation of N6-(dimethylallyl)adenosine (i(6)A). This chain is tRNA dimethylallyltransferase, found in Shewanella sp. (strain ANA-3).